The chain runs to 482 residues: 2-succinylbenzoate--CoA ligase (482 aa).

It belongs to the ATP-dependent AMP-binding enzyme family. MenE subfamily.

It carries out the reaction 2-succinylbenzoate + ATP + CoA = 2-succinylbenzoyl-CoA + AMP + diphosphate. Its pathway is quinol/quinone metabolism; 1,4-dihydroxy-2-naphthoate biosynthesis; 1,4-dihydroxy-2-naphthoate from chorismate: step 5/7. The protein operates within quinol/quinone metabolism; menaquinone biosynthesis. Converts 2-succinylbenzoate (OSB) to 2-succinylbenzoyl-CoA (OSB-CoA). In Bacillus cereus (strain ZK / E33L), this protein is 2-succinylbenzoate--CoA ligase.